The chain runs to 194 residues: Orotate phosphoribosyltransferase (194 aa).

E117–S125 is a 5-phospho-alpha-D-ribose 1-diphosphate binding site. Positions 121 and 149 each coordinate orotate.

Belongs to the purine/pyrimidine phosphoribosyltransferase family. PyrE subfamily. As to quaternary structure, homodimer. Mg(2+) serves as cofactor.

It carries out the reaction orotidine 5'-phosphate + diphosphate = orotate + 5-phospho-alpha-D-ribose 1-diphosphate. It functions in the pathway pyrimidine metabolism; UMP biosynthesis via de novo pathway; UMP from orotate: step 1/2. Its function is as follows. Catalyzes the transfer of a ribosyl phosphate group from 5-phosphoribose 1-diphosphate to orotate, leading to the formation of orotidine monophosphate (OMP). This chain is Orotate phosphoribosyltransferase, found in Maricaulis maris (strain MCS10) (Caulobacter maris).